A 120-amino-acid chain; its full sequence is Small ribosomal subunit protein eS17 (120 aa).

It belongs to the eukaryotic ribosomal protein eS17 family. Component of the small ribosomal subunit.

The protein localises to the cytoplasm. In Encephalitozoon cuniculi (strain GB-M1) (Microsporidian parasite), this protein is Small ribosomal subunit protein eS17 (RPS17).